The primary structure comprises 262 residues: Large ribosomal subunit protein uL5c (262 aa).

The N-terminal 39 residues, 1–39, are a transit peptide targeting the chloroplast; sequence MASPSLLQSSASSFHGRFSPLAAPSSARMLSPPLRNVVK.

Belongs to the universal ribosomal protein uL5 family. Part of the 50S ribosomal subunit; contacts the 5S rRNA.

The protein localises to the plastid. It is found in the chloroplast. Functionally, binds 5S rRNA, forms part of the central protuberance of the 50S subunit. This Arabidopsis thaliana (Mouse-ear cress) protein is Large ribosomal subunit protein uL5c (RPL5).